The following is a 351-amino-acid chain: Phosphoribosylformylglycinamidine cyclo-ligase (351 aa).

This sequence belongs to the AIR synthase family.

The protein resides in the cytoplasm. It catalyses the reaction 2-formamido-N(1)-(5-O-phospho-beta-D-ribosyl)acetamidine + ATP = 5-amino-1-(5-phospho-beta-D-ribosyl)imidazole + ADP + phosphate + H(+). It functions in the pathway purine metabolism; IMP biosynthesis via de novo pathway; 5-amino-1-(5-phospho-D-ribosyl)imidazole from N(2)-formyl-N(1)-(5-phospho-D-ribosyl)glycinamide: step 2/2. The polypeptide is Phosphoribosylformylglycinamidine cyclo-ligase (Burkholderia pseudomallei (strain 1710b)).